Here is a 384-residue protein sequence, read N- to C-terminus: GDP-mannose transporter (384 aa).

At 1–40 (MVEDKKTDDYTIEMDKMDQGSKNFEAAAPPPQPRTPPAGS) the chain is on the cytoplasmic side. Residues 41–61 (ISNNPILPVLAYCGSSILMTV) form a helical membrane-spanning segment. Residues 62-69 (MNKYVLSG) lie on the Lumenal side of the membrane. A helical transmembrane segment spans residues 70-90 (LDFNLNFFLLCVQSIVCIVAI). The Cytoplasmic segment spans residues 91 to 110 (QTCKSCGLITYRDFSADEAR). Residues 111-127 (KWFPITLLLIGMIYTGS) form a helical membrane-spanning segment. At 128–134 (KALQFLS) the chain is on the lumenal side. The helical transmembrane segment at 135–151 (IPVYTIFKNLTIILIAY) threads the bilayer. Residues 152–160 (GEVLWFGGS) are Cytoplasmic-facing. A helical membrane pass occupies residues 161 to 182 (VTGLTLFSFGLMVLSSIIAAWA). Residues 183 to 200 (DIKHAVESTGDATAKVST) are Lumenal-facing. A helical transmembrane segment spans residues 201-221 (LNAGYIWMLVNCLCTSSYVLG). Residues 222–236 (MRKRIKLTNFKDFDT) are Cytoplasmic-facing. A helical transmembrane segment spans residues 237–257 (LAMFYNNLLSIPVLIVLTGLM). Topologically, residues 258–276 (EDWSSANITRNFPPADRNN) are lumenal. N-linked (GlcNAc...) asparagine glycosylation occurs at asparagine 264. The helical transmembrane segment at 277-297 (IIFAMILSGLSSVFISYTSAW) threads the bilayer. Over 298–305 (CVRVTSST) the chain is Cytoplasmic. Residues 306–326 (TYSMVGALNKLPIALSGLIFF) traverse the membrane as a helical segment. Residues 327–329 (DAP) are Lumenal-facing. The chain crosses the membrane as a helical span at residues 330–350 (VTFPSVSAIVVGFVSGIVYAV). The Cytoplasmic portion of the chain corresponds to 351-384 (AKIKQNAKPKTGVLPMSNPPVSASSQSMRDSLRS). Residues 364–384 (LPMSNPPVSASSQSMRDSLRS) are disordered. Residues 369–384 (PPVSASSQSMRDSLRS) are compositionally biased toward polar residues.

Belongs to the TPT transporter family. SLC35D subfamily. As to quaternary structure, homooligomer.

The protein localises to the golgi apparatus membrane. It localises to the cytoplasmic vesicle membrane. Its subcellular location is the endoplasmic reticulum membrane. In terms of biological role, involved in the import of GDP-mannose from the cytoplasm into the Golgi lumen. In Aspergillus terreus (strain NIH 2624 / FGSC A1156), this protein is GDP-mannose transporter (gmt1).